Here is a 93-residue protein sequence, read N- to C-terminus: Putative pterin-4-alpha-carbinolamine dehydratase (93 aa).

It belongs to the pterin-4-alpha-carbinolamine dehydratase family.

It carries out the reaction (4aS,6R)-4a-hydroxy-L-erythro-5,6,7,8-tetrahydrobiopterin = (6R)-L-erythro-6,7-dihydrobiopterin + H2O. The sequence is that of Putative pterin-4-alpha-carbinolamine dehydratase from Chloroflexus aurantiacus (strain ATCC 29366 / DSM 635 / J-10-fl).